The sequence spans 359 residues: Fructose-bisphosphate aldolase (359 aa).

Position 62 (S62) interacts with D-glyceraldehyde 3-phosphate. The active-site Proton donor is D110. Zn(2+) is bound by residues H111, D145, E175, and H227. Residue G228 participates in dihydroxyacetone phosphate binding. H265 serves as a coordination point for Zn(2+). Dihydroxyacetone phosphate-binding positions include 266-268 (GGS) and 287-290 (NIDT).

It belongs to the class II fructose-bisphosphate aldolase family. In terms of assembly, homodimer. Requires Zn(2+) as cofactor.

It carries out the reaction beta-D-fructose 1,6-bisphosphate = D-glyceraldehyde 3-phosphate + dihydroxyacetone phosphate. Its pathway is carbohydrate degradation; glycolysis; D-glyceraldehyde 3-phosphate and glycerone phosphate from D-glucose: step 4/4. In terms of biological role, catalyzes the aldol condensation of dihydroxyacetone phosphate (DHAP or glycerone-phosphate) with glyceraldehyde 3-phosphate (G3P) to form fructose 1,6-bisphosphate (FBP) in gluconeogenesis and the reverse reaction in glycolysis. This is Fructose-bisphosphate aldolase (fba) from Haemophilus influenzae (strain ATCC 51907 / DSM 11121 / KW20 / Rd).